We begin with the raw amino-acid sequence, 157 residues long: Endoribonuclease YbeY (157 aa).

H116, H120, and H126 together coordinate Zn(2+).

It belongs to the endoribonuclease YbeY family. It depends on Zn(2+) as a cofactor.

It is found in the cytoplasm. In terms of biological role, single strand-specific metallo-endoribonuclease involved in late-stage 70S ribosome quality control and in maturation of the 3' terminus of the 16S rRNA. This chain is Endoribonuclease YbeY, found in Blochmanniella pennsylvanica (strain BPEN).